Consider the following 177-residue polypeptide: Nucleoside triphosphate/diphosphate phosphatase (177 aa).

R23 functions as the Proton donor in the catalytic mechanism. Mg(2+) contacts are provided by N87, D103, D105, D107, D120, and E123.

This sequence belongs to the Ntdp family. Mg(2+) serves as cofactor.

It catalyses the reaction a ribonucleoside 5'-triphosphate + H2O = a ribonucleoside 5'-diphosphate + phosphate + H(+). The catalysed reaction is a ribonucleoside 5'-diphosphate + H2O = a ribonucleoside 5'-phosphate + phosphate + H(+). In terms of biological role, has nucleoside phosphatase activity towards nucleoside triphosphates and nucleoside diphosphates. The polypeptide is Nucleoside triphosphate/diphosphate phosphatase (Streptococcus sanguinis (strain SK36)).